A 146-amino-acid chain; its full sequence is Hemoglobin subunit beta-1 (146 aa).

The Globin domain maps to histidine 2–histidine 146. Heme b contacts are provided by histidine 63 and histidine 92.

The protein belongs to the globin family. In terms of assembly, hb1 is a heterotetramer of two alpha chains and two beta-1 chains. Red blood cells.

Its function is as follows. Involved in oxygen transport from gills to the various peripheral tissues. The protein is Hemoglobin subunit beta-1 of Dissostichus eleginoides (Patagonian toothfish).